The chain runs to 202 residues: Flagellar transcriptional regulator FlhC (202 aa).

Cys-137, Cys-140, Cys-157, and Cys-160 together coordinate Zn(2+).

It belongs to the FlhC family. In terms of assembly, heterohexamer composed of two FlhC and four FlhD subunits. Each FlhC binds a FlhD dimer, forming a heterotrimer, and a hexamer assembles by dimerization of two heterotrimers. The cofactor is Zn(2+).

It localises to the cytoplasm. Functions in complex with FlhD as a master transcriptional regulator that regulates transcription of several flagellar and non-flagellar operons by binding to their promoter region. Activates expression of class 2 flagellar genes, including fliA, which is a flagellum-specific sigma factor that turns on the class 3 genes. Also regulates genes whose products function in a variety of physiological pathways. The polypeptide is Flagellar transcriptional regulator FlhC (Variovorax paradoxus (strain S110)).